Reading from the N-terminus, the 1103-residue chain is PALM2-AKAP2 fusion protein (1103 aa).

2 disordered regions span residues 178-197 (ESASNATETSGPDMTIKKPP) and 304-396 (YNGT…SSRD). Residues 179 to 189 (SASNATETSGP) are compositionally biased toward polar residues. Phosphoserine occurs at positions 322, 352, and 383. Positions 380–392 (VPVSPSSTTSSRC) are enriched in low complexity. Lysine 405 is covalently cross-linked (Glycyl lysine isopeptide (Lys-Gly) (interchain with G-Cter in SUMO1); alternate). Residue lysine 405 forms a Glycyl lysine isopeptide (Lys-Gly) (interchain with G-Cter in SUMO2); alternate linkage. Positions 444-521 (EEMLELEKER…QKQLQQQQQQ (78 aa)) form a coiled coil. Disordered stretches follow at residues 483–544 (EQLD…DKAK) and 566–662 (NSRQ…SKLW). Residues 490–505 (LESHKKYKERKERRAQ) show a composition bias toward basic and acidic residues. Over residues 506 to 521 (QEQLLLQKQLQQQQQQ) the composition is skewed to low complexity. Positions 522–531 (PPSQLCTAPA) are enriched in polar residues. Basic and acidic residues predominate over residues 533 to 544 (SHERASMIDKAK). The segment covering 566 to 579 (NSRQAVAKGQSTPR) has biased composition (polar residues). Residues serine 567 and serine 624 each carry the phosphoserine modification. Over residues 633 to 643 (AAGSQGNTASQ) the composition is skewed to polar residues. 3 positions are modified to phosphoserine: serine 692, serine 696, and serine 748. The segment covering 745-763 (QENSLADFSLPQTPQTDNP) has biased composition (polar residues). Positions 745–794 (QENSLADFSLPQTPQTDNPSEGRGEGVSKSFSDHGFYSPSSTLGDSPLVD) are disordered. The residue at position 757 (threonine 757) is a Phosphothreonine. Residues 797–810 (LEYQAGLLVQNAIQ) form a PKA-RII subunit binding domain region. The segment covering 817 to 829 (VDKAVSKTSRDGA) has biased composition (basic and acidic residues). The disordered stretch occupies residues 817–907 (VDKAVSKTSR…GPINMEETRP (91 aa)). Phosphoserine is present on serine 862. The segment covering 865–886 (QEKRDVLPKILPAEDRALRERG) has biased composition (basic and acidic residues). The stretch at 941–979 (KLRSRKQRTLSMIEEEIRAAQEREEELKRQRQVLQSTQS) forms a coiled coil. Serine 951, serine 979, serine 1009, and serine 1016 each carry phosphoserine. The disordered stretch occupies residues 962-1035 (EREEELKRQR…AAGTQRPKNL (74 aa)). The segment covering 976–990 (STQSPRTKNAPSLPS) has biased composition (polar residues).

As to expression, expressed in infantile heart and muscle, and fibroblasts.

The protein localises to the apical cell membrane. Binds to regulatory subunit (RII) of protein kinase A. May be involved in establishing polarity in signaling systems or in integrating PKA-RII isoforms with downstream effectors to capture, amplify and focus diffuse, trans-cellular signals carried by cAMP. Binds to and modulates the structure of the actin cytoskeleton. This chain is PALM2-AKAP2 fusion protein, found in Homo sapiens (Human).